The primary structure comprises 732 residues: Elongation factor 2 (732 aa).

One can recognise a tr-type G domain in the interval 19–230 (ERIRNMGIAA…VSFKDIIDLT (212 aa)). Residues 28–35 (AHIDHGKT), 94–98 (DTPGH), and 148–151 (NKVD) each bind GTP. Diphthamide is present on H597.

The protein belongs to the TRAFAC class translation factor GTPase superfamily. Classic translation factor GTPase family. EF-G/EF-2 subfamily.

It localises to the cytoplasm. In terms of biological role, catalyzes the GTP-dependent ribosomal translocation step during translation elongation. During this step, the ribosome changes from the pre-translocational (PRE) to the post-translocational (POST) state as the newly formed A-site-bound peptidyl-tRNA and P-site-bound deacylated tRNA move to the P and E sites, respectively. Catalyzes the coordinated movement of the two tRNA molecules, the mRNA and conformational changes in the ribosome. This is Elongation factor 2 from Thermococcus sibiricus (strain DSM 12597 / MM 739).